A 154-amino-acid chain; its full sequence is MSIAQNKKAFHDYFIEEKYEAGIVLEGWEVKAIRENRVQLKEAYVIIQRGEIYLIGCHVTPLGSASTHVRPDAIRTRKLLLHSEQIAKLIGKVERAGYTLVPLDMHYTRGRIKVQIGLAKGKKQYDKRHSEKEKDWKREQSSLMKKYVKTQAGS.

Belongs to the SmpB family.

The protein localises to the cytoplasm. Its function is as follows. Required for rescue of stalled ribosomes mediated by trans-translation. Binds to transfer-messenger RNA (tmRNA), required for stable association of tmRNA with ribosomes. tmRNA and SmpB together mimic tRNA shape, replacing the anticodon stem-loop with SmpB. tmRNA is encoded by the ssrA gene; the 2 termini fold to resemble tRNA(Ala) and it encodes a 'tag peptide', a short internal open reading frame. During trans-translation Ala-aminoacylated tmRNA acts like a tRNA, entering the A-site of stalled ribosomes, displacing the stalled mRNA. The ribosome then switches to translate the ORF on the tmRNA; the nascent peptide is terminated with the 'tag peptide' encoded by the tmRNA and targeted for degradation. The ribosome is freed to recommence translation, which seems to be the essential function of trans-translation. The protein is SsrA-binding protein of Methylobacillus flagellatus (strain ATCC 51484 / DSM 6875 / VKM B-1610 / KT).